Consider the following 253-residue polypeptide: Probable transcriptional regulatory protein RC0681 (253 aa).

The interval 1–21 is disordered; sequence MAGHSKFKNIQHRKGAQDKKR.

Belongs to the TACO1 family.

The protein resides in the cytoplasm. This is Probable transcriptional regulatory protein RC0681 from Rickettsia conorii (strain ATCC VR-613 / Malish 7).